Reading from the N-terminus, the 209-residue chain is Small ribosomal subunit protein uS5 (209 aa).

The S5 DRBM domain occupies 48 to 111 (LEDEVLDINM…DAAKLNITYI (64 aa)).

This sequence belongs to the universal ribosomal protein uS5 family. As to quaternary structure, part of the 30S ribosomal subunit. Contacts protein S4.

In terms of biological role, with S4 and S12 plays an important role in translational accuracy. The protein is Small ribosomal subunit protein uS5 of Methanosarcina acetivorans (strain ATCC 35395 / DSM 2834 / JCM 12185 / C2A).